Here is a 241-residue protein sequence, read N- to C-terminus: Pyridoxine 5'-phosphate synthase (241 aa).

Residue Asn-7 participates in 3-amino-2-oxopropyl phosphate binding. 9–10 contributes to the 1-deoxy-D-xylulose 5-phosphate binding site; the sequence is DH. Arg-18 contacts 3-amino-2-oxopropyl phosphate. Residue His-43 is the Proton acceptor of the active site. Arg-45 and His-50 together coordinate 1-deoxy-D-xylulose 5-phosphate. The active-site Proton acceptor is the Glu-70. Residue Thr-100 coordinates 1-deoxy-D-xylulose 5-phosphate. Catalysis depends on His-191, which acts as the Proton donor. Residues Gly-192 and 213–214 each bind 3-amino-2-oxopropyl phosphate; that span reads GH.

This sequence belongs to the PNP synthase family. As to quaternary structure, homooctamer; tetramer of dimers.

Its subcellular location is the cytoplasm. The enzyme catalyses 3-amino-2-oxopropyl phosphate + 1-deoxy-D-xylulose 5-phosphate = pyridoxine 5'-phosphate + phosphate + 2 H2O + H(+). Its pathway is cofactor biosynthesis; pyridoxine 5'-phosphate biosynthesis; pyridoxine 5'-phosphate from D-erythrose 4-phosphate: step 5/5. Its function is as follows. Catalyzes the complicated ring closure reaction between the two acyclic compounds 1-deoxy-D-xylulose-5-phosphate (DXP) and 3-amino-2-oxopropyl phosphate (1-amino-acetone-3-phosphate or AAP) to form pyridoxine 5'-phosphate (PNP) and inorganic phosphate. The chain is Pyridoxine 5'-phosphate synthase from Nitratidesulfovibrio vulgaris (strain ATCC 29579 / DSM 644 / CCUG 34227 / NCIMB 8303 / VKM B-1760 / Hildenborough) (Desulfovibrio vulgaris).